Consider the following 172-residue polypeptide: Shikimate kinase (172 aa).

Position 14–19 (14–19) interacts with ATP; it reads GAGKST. Ser-18 provides a ligand contact to Mg(2+). Residues Asp-36, Arg-60, and Gly-82 each contribute to the substrate site. Arg-120 is an ATP binding site. Arg-139 serves as a coordination point for substrate. Gln-156 serves as a coordination point for ATP.

The protein belongs to the shikimate kinase family. Monomer. Mg(2+) serves as cofactor.

It is found in the cytoplasm. The catalysed reaction is shikimate + ATP = 3-phosphoshikimate + ADP + H(+). It participates in metabolic intermediate biosynthesis; chorismate biosynthesis; chorismate from D-erythrose 4-phosphate and phosphoenolpyruvate: step 5/7. Its function is as follows. Catalyzes the specific phosphorylation of the 3-hydroxyl group of shikimic acid using ATP as a cosubstrate. The chain is Shikimate kinase from Vibrio vulnificus (strain CMCP6).